Reading from the N-terminus, the 75-residue chain is MASEVLAKPQMRGLLARRLRIHMVGAFLISLGVAALYKFGVAEPRKKAYADFYKNYSPEKDFEEMKKAGVFRSIK.

The Mitochondrial matrix portion of the chain corresponds to methionine 1–glycine 13. The helical transmembrane segment at leucine 14–lysine 54 threads the bilayer. At asparagine 55–lysine 75 the chain is on the mitochondrial intermembrane side.

This sequence belongs to the cytochrome c oxidase subunit 6c family. As to quaternary structure, component of the cytochrome c oxidase (complex IV, CIV), a multisubunit enzyme composed of 14 subunits. The complex is composed of a catalytic core of 3 subunits MT-CO1, MT-CO2 and MT-CO3, encoded in the mitochondrial DNA, and 11 supernumerary subunits COX4I, COX5A, COX5B, COX6A, COX6B, COX6C, COX7A, COX7B, COX7C, COX8 and NDUFA4, which are encoded in the nuclear genome. The complex exists as a monomer or a dimer and forms supercomplexes (SCs) in the inner mitochondrial membrane with NADH-ubiquinone oxidoreductase (complex I, CI) and ubiquinol-cytochrome c oxidoreductase (cytochrome b-c1 complex, complex III, CIII), resulting in different assemblies (supercomplex SCI(1)III(2)IV(1) and megacomplex MCI(2)III(2)IV(2)).

The protein localises to the mitochondrion inner membrane. Its pathway is energy metabolism; oxidative phosphorylation. Functionally, component of the cytochrome c oxidase, the last enzyme in the mitochondrial electron transport chain which drives oxidative phosphorylation. The respiratory chain contains 3 multisubunit complexes succinate dehydrogenase (complex II, CII), ubiquinol-cytochrome c oxidoreductase (cytochrome b-c1 complex, complex III, CIII) and cytochrome c oxidase (complex IV, CIV), that cooperate to transfer electrons derived from NADH and succinate to molecular oxygen, creating an electrochemical gradient over the inner membrane that drives transmembrane transport and the ATP synthase. Cytochrome c oxidase is the component of the respiratory chain that catalyzes the reduction of oxygen to water. Electrons originating from reduced cytochrome c in the intermembrane space (IMS) are transferred via the dinuclear copper A center (CU(A)) of subunit 2 and heme A of subunit 1 to the active site in subunit 1, a binuclear center (BNC) formed by heme A3 and copper B (CU(B)). The BNC reduces molecular oxygen to 2 water molecules using 4 electrons from cytochrome c in the IMS and 4 protons from the mitochondrial matrix. This chain is Cytochrome c oxidase subunit 6C (COX6C), found in Saimiri sciureus (Common squirrel monkey).